Consider the following 408-residue polypeptide: D-inositol 3-phosphate glycosyltransferase (408 aa).

His-7 contacts 1D-myo-inositol 3-phosphate. UDP-N-acetyl-alpha-D-glucosamine-binding positions include 13–14 (QP) and Gly-21. 1D-myo-inositol 3-phosphate contacts are provided by residues 18-23 (DAGGMN), Lys-76, Tyr-109, Thr-133, and Arg-153. UDP-N-acetyl-alpha-D-glucosamine contacts are provided by Arg-227, Lys-232, and Val-288. Residues Phe-297, Arg-298, and Ala-300 each coordinate Mg(2+). UDP-N-acetyl-alpha-D-glucosamine contacts are provided by Glu-310 and Glu-318. Thr-324 lines the Mg(2+) pocket.

This sequence belongs to the glycosyltransferase group 1 family. MshA subfamily. Homodimer.

It carries out the reaction 1D-myo-inositol 3-phosphate + UDP-N-acetyl-alpha-D-glucosamine = 1D-myo-inositol 2-acetamido-2-deoxy-alpha-D-glucopyranoside 3-phosphate + UDP + H(+). Catalyzes the transfer of a N-acetyl-glucosamine moiety to 1D-myo-inositol 3-phosphate to produce 1D-myo-inositol 2-acetamido-2-deoxy-glucopyranoside 3-phosphate in the mycothiol biosynthesis pathway. The chain is D-inositol 3-phosphate glycosyltransferase from Paenarthrobacter aurescens (strain TC1).